We begin with the raw amino-acid sequence, 121 residues long: Small ribosomal subunit protein uS13 (121 aa).

The segment at Arg-92 to Lys-121 is disordered.

This sequence belongs to the universal ribosomal protein uS13 family. As to quaternary structure, part of the 30S ribosomal subunit. Forms a loose heterodimer with protein S19. Forms two bridges to the 50S subunit in the 70S ribosome.

In terms of biological role, located at the top of the head of the 30S subunit, it contacts several helices of the 16S rRNA. In the 70S ribosome it contacts the 23S rRNA (bridge B1a) and protein L5 of the 50S subunit (bridge B1b), connecting the 2 subunits; these bridges are implicated in subunit movement. Contacts the tRNAs in the A and P-sites. This Burkholderia cenocepacia (strain ATCC BAA-245 / DSM 16553 / LMG 16656 / NCTC 13227 / J2315 / CF5610) (Burkholderia cepacia (strain J2315)) protein is Small ribosomal subunit protein uS13.